Here is a 273-residue protein sequence, read N- to C-terminus: Ribosomal RNA small subunit methyltransferase A (273 aa).

Positions 18, 20, 45, 66, 91, and 113 each coordinate S-adenosyl-L-methionine.

Belongs to the class I-like SAM-binding methyltransferase superfamily. rRNA adenine N(6)-methyltransferase family. RsmA subfamily.

The protein resides in the cytoplasm. It carries out the reaction adenosine(1518)/adenosine(1519) in 16S rRNA + 4 S-adenosyl-L-methionine = N(6)-dimethyladenosine(1518)/N(6)-dimethyladenosine(1519) in 16S rRNA + 4 S-adenosyl-L-homocysteine + 4 H(+). Specifically dimethylates two adjacent adenosines (A1518 and A1519) in the loop of a conserved hairpin near the 3'-end of 16S rRNA in the 30S particle. May play a critical role in biogenesis of 30S subunits. The chain is Ribosomal RNA small subunit methyltransferase A from Salmonella agona (strain SL483).